A 1241-amino-acid chain; its full sequence is ATP-dependent helicase/nuclease subunit A (1241 aa).

The UvrD-like helicase ATP-binding domain maps to 12–485 (SQWTDDQWKA…IDLAKNFRSR (474 aa)). 33–40 (AAAGSGKT) provides a ligand contact to ATP. Positions 505-805 (GEIDYDADAE…RIMTIHKSKG (301 aa)) constitute a UvrD-like helicase C-terminal domain.

Belongs to the helicase family. AddA subfamily. In terms of assembly, heterodimer of AddA and AddB/RexB. It depends on Mg(2+) as a cofactor.

The catalysed reaction is Couples ATP hydrolysis with the unwinding of duplex DNA by translocating in the 3'-5' direction.. It catalyses the reaction ATP + H2O = ADP + phosphate + H(+). In terms of biological role, the heterodimer acts as both an ATP-dependent DNA helicase and an ATP-dependent, dual-direction single-stranded exonuclease. Recognizes the chi site generating a DNA molecule suitable for the initiation of homologous recombination. The AddA nuclease domain is required for chi fragment generation; this subunit has the helicase and 3' -&gt; 5' nuclease activities. The chain is ATP-dependent helicase/nuclease subunit A from Bacillus cereus (strain ATCC 14579 / DSM 31 / CCUG 7414 / JCM 2152 / NBRC 15305 / NCIMB 9373 / NCTC 2599 / NRRL B-3711).